The sequence spans 285 residues: Small ribosomal subunit protein uS2 (285 aa).

Residues 262 to 285 are disordered; the sequence is NDDWNEDDTAPAAPGAASWGGAAF. Over residues 271 to 285 the composition is skewed to low complexity; it reads APAAPGAASWGGAAF.

This sequence belongs to the universal ribosomal protein uS2 family. Component of the small ribosomal subunit. Mature ribosomes consist of a small (40S) and a large (60S) subunit. The 40S subunit contains about 33 different proteins and 1 molecule of RNA (18S). The 60S subunit contains about 49 different proteins and 3 molecules of RNA (28S, 5.8S and 5S). Interacts with ribosomal protein S21.

It localises to the cytoplasm. Required for the assembly and/or stability of the 40S ribosomal subunit. Required for the processing of the 20S rRNA-precursor to mature 18S rRNA in a late step of the maturation of 40S ribosomal subunits. The protein is Small ribosomal subunit protein uS2 of Anopheles gambiae (African malaria mosquito).